We begin with the raw amino-acid sequence, 386 residues long: NADH kinase pos5, mitochondrial (386 aa).

The N-terminal 42 residues, Met-1 to Tyr-42, are a transit peptide targeting the mitochondrion.

This sequence belongs to the NAD kinase family.

Its subcellular location is the mitochondrion. The catalysed reaction is NADH + ATP = ADP + NADPH + H(+). Its function is as follows. Phosphorylates both NADH and NAD(+), with a preference for NADH. Anti-oxidant factor and key source of the cellular reductant NADPH. The sequence is that of NADH kinase pos5, mitochondrial (pos5) from Schizosaccharomyces pombe (strain 972 / ATCC 24843) (Fission yeast).